A 471-amino-acid chain; its full sequence is Mitochondrial distribution and morphology protein 10 (471 aa).

The disordered stretch occupies residues 429 to 455 (PSSFSSPSRAANSTPAGGGQSVGGGIS). The segment covering 444–455 (AGGGQSVGGGIS) has biased composition (gly residues).

This sequence belongs to the MDM10 family. Component of the ER-mitochondria encounter structure (ERMES) or MDM complex, composed of mmm1, mdm10, mdm12 and mdm34. Associates with the mitochondrial outer membrane sorting assembly machinery SAM(core) complex.

It is found in the mitochondrion outer membrane. Its function is as follows. Component of the ERMES/MDM complex, which serves as a molecular tether to connect the endoplasmic reticulum and mitochondria. Components of this complex are involved in the control of mitochondrial shape and protein biogenesis and may function in phospholipid exchange. mdm10 is involved in the late assembly steps of the general translocase of the mitochondrial outer membrane (TOM complex). Functions in the tom40-specific route of the assembly of outer membrane beta-barrel proteins, including the association of tom40 with the receptor tom22 and small TOM proteins. Can associate with the SAM(core) complex as well as the mdm12-mmm1 complex, both involved in late steps of the major beta-barrel assembly pathway, that is responsible for biogenesis of all outer membrane beta-barrel proteins. May act as a switch that shuttles between both complexes and channels precursor proteins into the tom40-specific pathway. Plays a role in mitochondrial morphology and in the inheritance of mitochondria. This chain is Mitochondrial distribution and morphology protein 10 (mdmB), found in Aspergillus fumigatus (strain ATCC MYA-4609 / CBS 101355 / FGSC A1100 / Af293) (Neosartorya fumigata).